Consider the following 342-residue polypeptide: Phosphate acyltransferase (342 aa).

This sequence belongs to the PlsX family. As to quaternary structure, homodimer. Probably interacts with PlsY.

Its subcellular location is the cytoplasm. It carries out the reaction a fatty acyl-[ACP] + phosphate = an acyl phosphate + holo-[ACP]. It participates in lipid metabolism; phospholipid metabolism. Catalyzes the reversible formation of acyl-phosphate (acyl-PO(4)) from acyl-[acyl-carrier-protein] (acyl-ACP). This enzyme utilizes acyl-ACP as fatty acyl donor, but not acyl-CoA. This Legionella pneumophila (strain Paris) protein is Phosphate acyltransferase.